The following is a 275-amino-acid chain: Pyridoxal phosphate homeostasis protein (275 aa).

Ser-6 is subject to Phosphoserine. Lys-47 carries the post-translational modification N6-(pyridoxal phosphate)lysine. Tyr-69 is modified (phosphotyrosine). At Lys-125 the chain carries N6-succinyllysine. Phosphoserine occurs at positions 226 and 244.

The protein belongs to the pyridoxal phosphate-binding protein YggS/PROSC family.

Its function is as follows. Pyridoxal 5'-phosphate (PLP)-binding protein, which may be involved in intracellular homeostatic regulation of pyridoxal 5'-phosphate (PLP), the active form of vitamin B6. This chain is Pyridoxal phosphate homeostasis protein, found in Pongo abelii (Sumatran orangutan).